A 428-amino-acid chain; its full sequence is Maltoporin (428 aa).

The N-terminal stretch at 1–24 (MTTLRKLPIALAVAAGVLSTQAMA) is a signal peptide.

The protein belongs to the porin LamB (TC 1.B.3) family. As to quaternary structure, homotrimer formed of three 18-stranded antiparallel beta-barrels, containing three independent channels.

Its subcellular location is the cell outer membrane. The catalysed reaction is beta-maltose(in) = beta-maltose(out). Involved in the transport of maltose and maltodextrins. This Yersinia enterocolitica serotype O:8 / biotype 1B (strain NCTC 13174 / 8081) protein is Maltoporin.